A 151-amino-acid polypeptide reads, in one-letter code: SsrA-binding protein (151 aa).

Belongs to the SmpB family.

Its subcellular location is the cytoplasm. Functionally, required for rescue of stalled ribosomes mediated by trans-translation. Binds to transfer-messenger RNA (tmRNA), required for stable association of tmRNA with ribosomes. tmRNA and SmpB together mimic tRNA shape, replacing the anticodon stem-loop with SmpB. tmRNA is encoded by the ssrA gene; the 2 termini fold to resemble tRNA(Ala) and it encodes a 'tag peptide', a short internal open reading frame. During trans-translation Ala-aminoacylated tmRNA acts like a tRNA, entering the A-site of stalled ribosomes, displacing the stalled mRNA. The ribosome then switches to translate the ORF on the tmRNA; the nascent peptide is terminated with the 'tag peptide' encoded by the tmRNA and targeted for degradation. The ribosome is freed to recommence translation, which seems to be the essential function of trans-translation. This chain is SsrA-binding protein, found in Campylobacter fetus subsp. fetus (strain 82-40).